The following is a 135-amino-acid chain: Large ribosomal subunit protein bL12c (135 aa).

It belongs to the bacterial ribosomal protein bL12 family. Homodimer. Part of the ribosomal stalk of the 50S ribosomal subunit. Forms a multimeric L10(L12)X complex, where L10 forms an elongated spine to which 2 to 4 L12 dimers bind in a sequential fashion. Binds GTP-bound translation factors.

The protein localises to the plastid. It is found in the chloroplast. Functionally, forms part of the ribosomal stalk which helps the ribosome interact with GTP-bound translation factors. Is thus essential for accurate translation. In Chara vulgaris (Common stonewort), this protein is Large ribosomal subunit protein bL12c.